A 195-amino-acid polypeptide reads, in one-letter code: MGGIFSKGYLPELPNGSLIKLGIIGLENSGKTTLLNKFIDASSKKSIASVLISTGVYIESIIFKGWEIFAGDLLYPNYISKIYKPYLLGSDVIIFMIDSSDIHQMTEAKNQIDLLIQEQCINSSVFLVMANKQDQKRCVSIHQLEQYLELYRLTNPWKCLPLSLIQEKGIEDLIKWILENTVVRKTYNNQLQTLQ.

Gly2 carries the N-myristoyl glycine lipid modification. Residues 25–32 (GLENSGKT), 72–76 (DLLYP), and 131–134 (NKQD) each bind GTP.

It belongs to the small GTPase superfamily. Arf family.

May be involved in trafficking events within the endosomal system. The chain is ADP-ribosylation factor L (arrL) from Dictyostelium discoideum (Social amoeba).